We begin with the raw amino-acid sequence, 358 residues long: Stearoyl-CoA desaturase 2 (358 aa).

The Cytoplasmic segment spans residues 1-71 (MPAHILQEIS…EGPPPKLEYV (71 aa)). Residues 14–43 (SATTTITAPPSGGQQNGGEKFEKNPHHWGA) form a disordered region. Basic and acidic residues predominate over residues 32 to 43 (EKFEKNPHHWGA). Residues 72–92 (WRNIVLMALLHIGALYGITLV) traverse the membrane as a helical segment. A substrate-binding site is contributed by N74. Topologically, residues 93 to 96 (PSCK) are lumenal. Residues 97–117 (VYTCLFAYLYYVISALGITAG) traverse the membrane as a helical segment. Topologically, residues 118–216 (AHRLWSHRTY…EKLVMFQRRY (99 aa)) are cytoplasmic. Fe cation contacts are provided by H119 and H124. The Histidine box-1 signature appears at 119–124 (HRLWSH). Substrate contacts are provided by N147, R154, and D155. H156, H159, and H160 together coordinate Fe cation. A Histidine box-2 motif is present at residues 156-160 (HRAHH). Residues R187 and K188 each coordinate substrate. Residues 217-236 (YKPGLLLMCFILPTLVPWYC) form a helical membrane-spanning segment. Over 237 to 240 (WGET) the chain is Lumenal. A helical transmembrane segment spans residues 241–262 (FVNSLCVSTFLRYAVVLNATWL). W261 is a substrate binding site. The Cytoplasmic segment spans residues 263-358 (VNSAAHLYGY…RTGEESCKSG (96 aa)). The Fe cation site is built by H268, H297, H300, and H301. The Histidine box-3 signature appears at 297–301 (HNYHH).

Belongs to the fatty acid desaturase type 1 family. It depends on Fe(2+) as a cofactor. In terms of tissue distribution, detected in brain and adipose tissue, and at much lower levels in testis. Detected in liver when rats are kept on a fat-free diet, but not when their food contains unsaturated fatty acids.

It is found in the endoplasmic reticulum membrane. Its subcellular location is the microsome membrane. The catalysed reaction is octadecanoyl-CoA + 2 Fe(II)-[cytochrome b5] + O2 + 2 H(+) = (9Z)-octadecenoyl-CoA + 2 Fe(III)-[cytochrome b5] + 2 H2O. The enzyme catalyses hexadecanoyl-CoA + 2 Fe(II)-[cytochrome b5] + O2 + 2 H(+) = (9Z)-hexadecenoyl-CoA + 2 Fe(III)-[cytochrome b5] + 2 H2O. Stearoyl-CoA desaturase that utilizes O(2) and electrons from reduced cytochrome b5 to introduce the first double bond into saturated fatty acyl-CoA substrates. Catalyzes the insertion of a cis double bond at the delta-9 position into fatty acyl-CoA substrates including palmitoyl-CoA and stearoyl-CoA. Gives rise to a mixture of 16:1 and 18:1 unsaturated fatty acids. Contributes to the biosynthesis of membrane phospholipids, cholesterol esters and triglycerides, especially during embryonic development and in neonates. Important for normal permeability barrier function of the skin in neonates. The protein is Stearoyl-CoA desaturase 2 (Scd2) of Rattus norvegicus (Rat).